The sequence spans 330 residues: ADP-L-glycero-D-manno-heptose-6-epimerase (330 aa).

NADP(+) contacts are provided by residues 11-12, 32-33, lysine 39, lysine 54, 75-79, and asparagine 92; these read FI, DN, and EGACS. Tyrosine 139 (proton acceptor) is an active-site residue. Lysine 143 is an NADP(+) binding site. Residue asparagine 168 participates in substrate binding. Valine 169 and lysine 177 together coordinate NADP(+). The active-site Proton acceptor is the lysine 177. Residues arginine 179, histidine 186, 200–203, arginine 213, and tyrosine 292 each bind substrate; that span reads FGEY.

The protein belongs to the NAD(P)-dependent epimerase/dehydratase family. HldD subfamily. In terms of assembly, homopentamer. NADP(+) is required as a cofactor.

The catalysed reaction is ADP-D-glycero-beta-D-manno-heptose = ADP-L-glycero-beta-D-manno-heptose. The protein operates within nucleotide-sugar biosynthesis; ADP-L-glycero-beta-D-manno-heptose biosynthesis; ADP-L-glycero-beta-D-manno-heptose from D-glycero-beta-D-manno-heptose 7-phosphate: step 4/4. Catalyzes the interconversion between ADP-D-glycero-beta-D-manno-heptose and ADP-L-glycero-beta-D-manno-heptose via an epimerization at carbon 6 of the heptose. The protein is ADP-L-glycero-D-manno-heptose-6-epimerase of Paraburkholderia phytofirmans (strain DSM 17436 / LMG 22146 / PsJN) (Burkholderia phytofirmans).